A 95-amino-acid polypeptide reads, in one-letter code: MKRNSRKTFVGKVVSDKMQKTITVVVDIYKKDPLYGKRVRQSKKFHVHDEEQVAKIGNLVNFMETRPLSKTKKFRLLKVLSHGKESEVRHSGETK.

This sequence belongs to the universal ribosomal protein uS17 family. Part of the 30S ribosomal subunit.

Its function is as follows. One of the primary rRNA binding proteins, it binds specifically to the 5'-end of 16S ribosomal RNA. This is Small ribosomal subunit protein uS17 from Phytoplasma australiense.